We begin with the raw amino-acid sequence, 965 residues long: Valine--tRNA ligase (965 aa).

A disordered region spans residues 1–22 (MENTPSHINKTEPSLDKTYSPQ). A 'HIGH' region motif is present at residues 56-66 (PNVTGSLHMGH). Residues 568-572 (KMSKS) carry the 'KMSKS' region motif. ATP is bound at residue lysine 571. Positions 896 to 965 (LIDKATELDR…IEQQATIAAL (70 aa)) form a coiled coil.

The protein belongs to the class-I aminoacyl-tRNA synthetase family. ValS type 1 subfamily. Monomer.

It localises to the cytoplasm. The enzyme catalyses tRNA(Val) + L-valine + ATP = L-valyl-tRNA(Val) + AMP + diphosphate. Its function is as follows. Catalyzes the attachment of valine to tRNA(Val). As ValRS can inadvertently accommodate and process structurally similar amino acids such as threonine, to avoid such errors, it has a 'posttransfer' editing activity that hydrolyzes mischarged Thr-tRNA(Val) in a tRNA-dependent manner. This Yersinia pseudotuberculosis serotype I (strain IP32953) protein is Valine--tRNA ligase.